A 574-amino-acid polypeptide reads, in one-letter code: MRDPGAAAPLSSLGLCALVLALLGALSAGAGAQPYHGEKGISVPDHGFCQPISIPLCTDIAYNQTILPNLLGHTNQEDAGLEVHQFYPLVKVQCSPELRFFLCSMYAPVCTVLDQAIPPCRSLCERARQGCEALMNKFGFQWPERLRCENFPVHGAGEICVGQNTSDGSGGPGGGPTAYPTAPYLPDLPFTALPPGASDGRGRPAFPFSCPRQLKVPPYLGYRFLGERDCGAPCEPGRANGLMYFKEEERRFARLWVGVWSVLCCASTLFTVLTYLVDMRRFSYPERPIIFLSGCYFMVAVAHVAGFLLEDRAVCVERFSDDGYRTVAQGTKKEGCTILFMVLYFFGMASSIWWVILSLTWFLAAGMKWGHEAIEANSQYFHLAAWAVPAVKTITILAMGQVDGDLLSGVCYVGLSSVDALRGFVLAPLFVYLFIGTSFLLAGFVSLFRIRTIMKHDGTKTEKLEKLMVRIGVFSVLYTVPATIVLACYFYEQAFREHWERTWLLQTCKSYAVPCPPGHFPPMSPDFTVFMIKYLMTMIVGITTGFWIWSGKTLQSWRRFYHRLSHSSKGETAV.

Positions 1–32 (MRDPGAAAPLSSLGLCALVLALLGALSAGAGA) are cleaved as a signal peptide. The Extracellular segment spans residues 33-256 (QPYHGEKGIS…EEERRFARLW (224 aa)). Residues 44-163 (PDHGFCQPIS…HGAGEICVGQ (120 aa)) form the FZ domain. Cystine bridges form between C49–C110, C57–C103, C94–C131, C120–C160, and C124–C148. The N-linked (GlcNAc...) asparagine glycan is linked to N63. N164 carries N-linked (GlcNAc...) asparagine glycosylation. The chain crosses the membrane as a helical span at residues 257-277 (VGVWSVLCCASTLFTVLTYLV). The Cytoplasmic segment spans residues 278-288 (DMRRFSYPERP). A helical transmembrane segment spans residues 289-309 (IIFLSGCYFMVAVAHVAGFLL). Topologically, residues 310–336 (EDRAVCVERFSDDGYRTVAQGTKKEGC) are extracellular. Residues 337–357 (TILFMVLYFFGMASSIWWVIL) traverse the membrane as a helical segment. Residues 358-379 (SLTWFLAAGMKWGHEAIEANSQ) are Cytoplasmic-facing. A helical membrane pass occupies residues 380 to 400 (YFHLAAWAVPAVKTITILAMG). The Extracellular portion of the chain corresponds to 401-423 (QVDGDLLSGVCYVGLSSVDALRG). Residues 424 to 444 (FVLAPLFVYLFIGTSFLLAGF) traverse the membrane as a helical segment. Residues 445–470 (VSLFRIRTIMKHDGTKTEKLEKLMVR) are Cytoplasmic-facing. Residues 471 to 491 (IGVFSVLYTVPATIVLACYFY) form a helical membrane-spanning segment. Residues 492–528 (EQAFREHWERTWLLQTCKSYAVPCPPGHFPPMSPDFT) lie on the Extracellular side of the membrane. The helical transmembrane segment at 529 to 549 (VFMIKYLMTMIVGITTGFWIW) threads the bilayer. Topologically, residues 550–574 (SGKTLQSWRRFYHRLSHSSKGETAV) are cytoplasmic. Positions 552 to 557 (KTLQSW) match the Lys-Thr-X-X-X-Trp motif, mediates interaction with the PDZ domain of Dvl family members motif. A PDZ-binding motif is present at residues 572–574 (TAV).

This sequence belongs to the G-protein coupled receptor Fz/Smo family. In terms of assembly, interacts with MAGI3. Interacts with DVL1. Interacts with CCDC88C/DAPLE; the interaction displaces DVL1 from FZD7, leading to inhibition of canonical Wnt signaling and triggering of non-canonical Wnt responses. Interacts with MYOC. Binds to SDCBP; this interaction is increased by inositol trisphosphate (IP3). Interacts with glypican GPC3. As to quaternary structure, (Microbial infection) Interacts with C.difficile toxin TcdB; frizzled receptors constitute the major host receptors for TcdB in the colonic epithelium. In terms of processing, ubiquitinated by ZNRF3, leading to its degradation by the proteasome. In terms of tissue distribution, high expression in adult skeletal muscle and fetal kidney, followed by fetal lung, adult heart, brain, and placenta. Specifically expressed in squamous cell esophageal carcinomas.

Its subcellular location is the cell membrane. It is found in the endosome membrane. In terms of biological role, receptor for Wnt proteins. Most frizzled receptors are coupled to the beta-catenin canonical signaling pathway, which leads to the activation of disheveled proteins, inhibition of GSK-3 kinase, nuclear accumulation of beta-catenin and activation of Wnt target genes. A second signaling pathway involving PKC and calcium fluxes has been seen for some family members, but it is not yet clear if it represents a distinct pathway or if it can be integrated in the canonical pathway, as PKC seems to be required for Wnt-mediated inactivation of GSK-3 kinase. Both pathways seem to involve interactions with G-proteins. Activation by WNT8 induces expression of beta-catenin target genes. Following ligand activation, binds to CCDC88C/DAPLE which displaces DVL1 from FZD7 and leads to inhibition of canonical Wnt signaling, activation of G-proteins by CCDC88C and triggering of non-canonical Wnt responses. May be involved in transduction and intercellular transmission of polarity information during tissue morphogenesis and/or in differentiated tissues. Functionally, (Microbial infection) Acts as a receptor for C.difficile toxin TcdB in the colonic epithelium. This chain is Frizzled-7 (FZD7), found in Homo sapiens (Human).